A 247-amino-acid chain; its full sequence is Myelin-oligodendrocyte glycoprotein (247 aa).

An N-terminal signal peptide occupies residues 1–29 (MASLSRPSLPSCLCSFLLLLLLQVSSSYA). The Extracellular segment spans residues 30–154 (GQFRVIGPRH…EDPFYWVSPG (125 aa)). An Ig-like V-type domain is found at 32 to 145 (FRVIGPRHPI…EEAAMELKVE (114 aa)). A disulfide bond links cysteine 53 and cysteine 127. A glycan (N-linked (GlcNAc...) asparagine) is linked at asparagine 60. A helical transmembrane segment spans residues 155–175 (VLVLLAVLPVLLLQITVGLIF). The Cytoplasmic segment spans residues 176 to 210 (LCLQYRLRGKLRAEIENLHRTFDPHFLRVPCWKIT). Residues 211–231 (LFVIVPVLGPLVALIICYNWL) form a helical membrane-spanning segment. Residues 232–247 (HRRLAGQFLEELRNPF) are Extracellular-facing.

It belongs to the immunoglobulin superfamily. BTN/MOG family. In terms of assembly, homodimer. May form heterodimers between the different isoforms. As to quaternary structure, (Microbial infection) Interacts with rubella virus E2 glycoprotein. Found exclusively in the CNS, where it is localized on the surface of myelin and oligodendrocyte cytoplasmic membranes.

The protein resides in the cell membrane. Its function is as follows. Mediates homophilic cell-cell adhesion. Minor component of the myelin sheath. May be involved in completion and/or maintenance of the myelin sheath and in cell-cell communication. In terms of biological role, (Microbial infection) Acts as a receptor for rubella virus. This Homo sapiens (Human) protein is Myelin-oligodendrocyte glycoprotein (MOG).